A 296-amino-acid chain; its full sequence is Myeloid differentiation primary response protein MyD88 (296 aa).

Positions 54-109 constitute a Death domain; it reads MDFEYLEIRQLETQADPTGRLLDAWQGRPGASVGRLLELLTKLGRDDVLLELGPSI. The tract at residues 110–155 is intermediate domain; the sequence is EEDCQKYILKQQQEEAEKPLQVAAVDSSVPRTAELAGITTLDDPLG. The TIR domain occupies 159 to 293; sequence ERFDAFICYC…WFWTRLAKAL (135 aa). A Phosphoserine modification is found at Ser244.

As to quaternary structure, homodimer. Also forms heterodimers with TIRAP. Binds to TLR2, TLR5, IRAK1, IRAK2 and IRAK4 via their respective TIR domains. Interacts with IL18R1. Interacts with BMX, IL1RL1, IKBKE and IRF7. Interacts with LRRFIP1 and LRRFIP2; this interaction positively regulates Toll-like receptor (TLR) signaling in response to agonist. Interacts with FLII. LRRFIP1 and LRRFIP2 compete with FLII for MYD88-binding. Interacts with IRF1. Upon IL1B treatment, forms a complex with PELI1, IRAK1, IRAK4 and TRAF6; this complex recruits MAP3K7/TAK1, TAB1 and TAB2 to mediate NF-kappa-B activation. Direct binding of SMAD6 to PELI1 prevents the complex formation and hence negatively regulates IL1R-TLR signaling and eventually NF-kappa-B-mediated gene expression. May interact with PIK3AP1. Interacts (via TIR domain) with DHX9 (via H2A and OB-fold regions); this interaction is direct. Interacts with OTUD4 deubiquitinase; the interaction is direct. Interacts with TLR4. (Microbial infection) In case of infection, interacts with uropathogenic E.coli protein TcpC; suppressing Toll-like receptor (TLR)-mediated cytokine production. In terms of assembly, (Microbial infection) In case of infection, interacts with uropathogenic E.faecalis protein TcpF; suppressing Toll-like receptor (TLR)-mediated cytokine production. As to quaternary structure, (Microbial infection) In case of infection, interacts with B.melitensis protein TcpB. (Microbial infection) Interacts with human metapneumovirus protein M2-2; this interaction prevents MYD88-mediated cytokine secretion. Post-translationally, ubiquitinated; undergoes 'Lys-63'-linked polyubiquitination. OTUD4 specifically hydrolyzes 'Lys-63'-linked polyubiquitinated MYD88. Deubiquitinated by USP3 that cleaves 'Lys-63'-linked ubiquitin chains leading to inhibition of MYD88-induced NF-kappa-B signaling. (Microbial infection) Ubiquitinated by human herpesvirus 8 (KSHV) protein RTA/ORF50, leading to proteasomal degradation ans suppression of TLR4 signaling pathway. In terms of tissue distribution, ubiquitous.

Its subcellular location is the cytoplasm. The protein resides in the nucleus. Adapter protein involved in the Toll-like receptor and IL-1 receptor signaling pathway in the innate immune response. Acts via IRAK1, IRAK2, IRF7 and TRAF6, leading to NF-kappa-B activation, cytokine secretion and the inflammatory response. Increases IL-8 transcription. Involved in IL-18-mediated signaling pathway. Activates IRF1 resulting in its rapid migration into the nucleus to mediate an efficient induction of IFN-beta, NOS2/INOS, and IL12A genes. Upon TLR8 activation by GU-rich single-stranded RNA (GU-rich RNA) derived from viruses such as SARS-CoV-2, SARS-CoV and HIV-1, induces IL1B release through NLRP3 inflammasome activation. MyD88-mediated signaling in intestinal epithelial cells is crucial for maintenance of gut homeostasis and controls the expression of the antimicrobial lectin REG3G in the small intestine. In Homo sapiens (Human), this protein is Myeloid differentiation primary response protein MyD88.